Consider the following 264-residue polypeptide: Phosphonoacetaldehyde hydrolase (264 aa).

Catalysis depends on D9, which acts as the Nucleophile. Mg(2+) is bound by residues D9 and A11. The Schiff-base intermediate with substrate role is filled by K50. D183 is a Mg(2+) binding site.

This sequence belongs to the HAD-like hydrolase superfamily. PhnX family. Homodimer. It depends on Mg(2+) as a cofactor.

The catalysed reaction is phosphonoacetaldehyde + H2O = acetaldehyde + phosphate + H(+). Its function is as follows. Involved in phosphonate degradation. The sequence is that of Phosphonoacetaldehyde hydrolase from Bacillus cereus (strain AH820).